Reading from the N-terminus, the 842-residue chain is Alanine--tRNA ligase (842 aa).

Histidine 549, histidine 553, cysteine 650, and histidine 654 together coordinate Zn(2+).

Belongs to the class-II aminoacyl-tRNA synthetase family. Zn(2+) serves as cofactor.

It is found in the cytoplasm. It catalyses the reaction tRNA(Ala) + L-alanine + ATP = L-alanyl-tRNA(Ala) + AMP + diphosphate. Functionally, catalyzes the attachment of alanine to tRNA(Ala) in a two-step reaction: alanine is first activated by ATP to form Ala-AMP and then transferred to the acceptor end of tRNA(Ala). Also edits incorrectly charged Ser-tRNA(Ala) and Gly-tRNA(Ala) via its editing domain. The chain is Alanine--tRNA ligase from Campylobacter jejuni subsp. jejuni serotype O:23/36 (strain 81-176).